Reading from the N-terminus, the 245-residue chain is 4-hydroxy-tetrahydrodipicolinate reductase (245 aa).

NAD(+) contacts are provided by residues 7–12, D33, 75–77, and 102–105; these read GAKGKV, GTT, and APNF. Catalysis depends on H132, which acts as the Proton donor/acceptor. Position 133 (H133) interacts with (S)-2,3,4,5-tetrahydrodipicolinate. Residue K136 is the Proton donor of the active site. 142-143 serves as a coordination point for (S)-2,3,4,5-tetrahydrodipicolinate; that stretch reads GT.

The protein belongs to the DapB family.

The protein localises to the cytoplasm. It carries out the reaction (S)-2,3,4,5-tetrahydrodipicolinate + NAD(+) + H2O = (2S,4S)-4-hydroxy-2,3,4,5-tetrahydrodipicolinate + NADH + H(+). It catalyses the reaction (S)-2,3,4,5-tetrahydrodipicolinate + NADP(+) + H2O = (2S,4S)-4-hydroxy-2,3,4,5-tetrahydrodipicolinate + NADPH + H(+). Its pathway is amino-acid biosynthesis; L-lysine biosynthesis via DAP pathway; (S)-tetrahydrodipicolinate from L-aspartate: step 4/4. Its function is as follows. Catalyzes the conversion of 4-hydroxy-tetrahydrodipicolinate (HTPA) to tetrahydrodipicolinate. The protein is 4-hydroxy-tetrahydrodipicolinate reductase of Mycolicibacterium paratuberculosis (strain ATCC BAA-968 / K-10) (Mycobacterium paratuberculosis).